The following is a 149-amino-acid chain: Ribosomal RNA large subunit methyltransferase H (149 aa).

S-adenosyl-L-methionine contacts are provided by residues Leu71, Gly98, and 117–122; that span reads LSKLTL.

This sequence belongs to the RNA methyltransferase RlmH family. As to quaternary structure, homodimer.

The protein localises to the cytoplasm. The catalysed reaction is pseudouridine(1915) in 23S rRNA + S-adenosyl-L-methionine = N(3)-methylpseudouridine(1915) in 23S rRNA + S-adenosyl-L-homocysteine + H(+). Specifically methylates the pseudouridine at position 1915 (m3Psi1915) in 23S rRNA. The chain is Ribosomal RNA large subunit methyltransferase H from Campylobacter jejuni subsp. jejuni serotype O:6 (strain 81116 / NCTC 11828).